A 161-amino-acid polypeptide reads, in one-letter code: MKVGIIMGSKSDWPTMKLAADMLDQFGVSYETKVVSAHRTPQLLADYASSAKERGIKVIIAGAGGAAHLPGMAAAFTSLPVLGVPVQSRALKGMDSLLSIVQMPKGIAVGTLAIGEAGAANAGILAAQILGTHDESIMAKVEAFRNEQTETVLANPNPAED.

Residues Ser9, Asp12, and Arg39 each coordinate substrate.

This sequence belongs to the AIR carboxylase family. Class I subfamily.

It catalyses the reaction 5-carboxyamino-1-(5-phospho-D-ribosyl)imidazole + H(+) = 5-amino-1-(5-phospho-D-ribosyl)imidazole-4-carboxylate. Its pathway is purine metabolism; IMP biosynthesis via de novo pathway; 5-amino-1-(5-phospho-D-ribosyl)imidazole-4-carboxylate from 5-amino-1-(5-phospho-D-ribosyl)imidazole (N5-CAIR route): step 2/2. In terms of biological role, catalyzes the conversion of N5-carboxyaminoimidazole ribonucleotide (N5-CAIR) to 4-carboxy-5-aminoimidazole ribonucleotide (CAIR). This is N5-carboxyaminoimidazole ribonucleotide mutase from Vibrio parahaemolyticus serotype O3:K6 (strain RIMD 2210633).